The chain runs to 1400 residues: DNA-directed RNA polymerase subunit beta' (1400 aa).

4 residues coordinate Zn(2+): Cys-70, Cys-72, Cys-85, and Cys-88. Residues Asp-460, Asp-462, and Asp-464 each coordinate Mg(2+). Cys-814, Cys-888, Cys-895, and Cys-898 together coordinate Zn(2+). The tract at residues 1368 to 1400 is disordered; the sequence is RQAKRAEAQEGPSAEQATDNLAALLNAGFSSDE.

This sequence belongs to the RNA polymerase beta' chain family. In terms of assembly, the RNAP catalytic core consists of 2 alpha, 1 beta, 1 beta' and 1 omega subunit. When a sigma factor is associated with the core the holoenzyme is formed, which can initiate transcription. Mg(2+) serves as cofactor. It depends on Zn(2+) as a cofactor.

It catalyses the reaction RNA(n) + a ribonucleoside 5'-triphosphate = RNA(n+1) + diphosphate. Functionally, DNA-dependent RNA polymerase catalyzes the transcription of DNA into RNA using the four ribonucleoside triphosphates as substrates. The sequence is that of DNA-directed RNA polymerase subunit beta' from Vibrio parahaemolyticus serotype O3:K6 (strain RIMD 2210633).